Here is a 224-residue protein sequence, read N- to C-terminus: tRNA (guanine-N(7)-)-methyltransferase (224 aa).

Residues glutamate 45, glutamate 70, aspartate 97, and aspartate 119 each coordinate S-adenosyl-L-methionine. Aspartate 119 is an active-site residue. Substrate contacts are provided by residues lysine 123, aspartate 155, and 199–202 (TEYE).

This sequence belongs to the class I-like SAM-binding methyltransferase superfamily. TrmB family.

It carries out the reaction guanosine(46) in tRNA + S-adenosyl-L-methionine = N(7)-methylguanosine(46) in tRNA + S-adenosyl-L-homocysteine. It functions in the pathway tRNA modification; N(7)-methylguanine-tRNA biosynthesis. Its function is as follows. Catalyzes the formation of N(7)-methylguanine at position 46 (m7G46) in tRNA. This Ureaplasma urealyticum serovar 10 (strain ATCC 33699 / Western) protein is tRNA (guanine-N(7)-)-methyltransferase.